The primary structure comprises 763 residues: Amine oxidase [copper-containing] 3 (763 aa).

Residues 1–5 lie on the Cytoplasmic side of the membrane; that stretch reads MNQKT. Residues 6-26 form a helical; Signal-anchor for type II membrane protein membrane-spanning segment; it reads ILVLLILAVITIFALVCVLLV. The Extracellular segment spans residues 27–763; sequence GRGGDGGEPS…AFSHGGFSHN (737 aa). The O-linked (GalNAc...) serine glycan is linked to Ser43. Residue Asn137 is glycosylated (N-linked (GlcNAc...) asparagine). An intrachain disulfide couples Cys198 to Cys199. O-linked (GalNAc...) threonine glycosylation occurs at Thr212. N-linked (GlcNAc...) asparagine glycosylation is found at Asn232 and Asn294. The Proton acceptor role is filled by Asp386. An intrachain disulfide couples Cys404 to Cys430. Tyr471 serves as the catalytic Schiff-base intermediate with substrate; via topaquinone. Tyr471 is modified (2',4',5'-topaquinone). Residues His520 and His522 each coordinate Cu(2+). 4 residues coordinate Ca(2+): Asp529, Leu530, Asp531, and Glu572. N-linked (GlcNAc...) (complex) asparagine glycosylation is present at Asn592. Asn618 carries N-linked (GlcNAc...) asparagine glycosylation. Glu641, Phe663, and Asn665 together coordinate Ca(2+). Asn666 carries an N-linked (GlcNAc...) asparagine glycan. Ca(2+) contacts are provided by Glu667, Asp673, and Leu674. Thr679 carries O-linked (GlcNAc) threonine glycosylation. Residue His684 participates in Cu(2+) binding. An intrachain disulfide couples Cys734 to Cys741.

It belongs to the copper/topaquinone oxidase family. Homodimer; disulfide-linked. Can heterodimerize with isoform 2 leading to reduced surface expression. Probably forms heterodimers with AOC2. Cu(2+) is required as a cofactor. Ca(2+) serves as cofactor. It depends on L-topaquinone as a cofactor. Topaquinone (TPQ) is generated by copper-dependent autoxidation of a specific tyrosyl residue. Post-translationally, N- and O-glycosylated. In terms of tissue distribution, strongly expressed on the high endothelial venules of peripheral lymph nodes and on hepatic endothelia. Also highly expressed in appendix, lung and small intestine. Expressed also in adipose tissue, in bone marrow, colon, heart, kidney, ovary, pancreas, placenta, prostate, skeletal muscle, spleen and testis. Isoform 2 seems to be the predominant transcript in fetal kidneys, fetal cartilage and fetal tonsils. The highest relative expression of isoform 2 occurs in skeletal muscle, heart, pancreas, kidney, and lung.

It is found in the cell membrane. The catalysed reaction is methylamine + O2 + H2O = formaldehyde + H2O2 + NH4(+). It catalyses the reaction benzylamine + O2 + H2O = benzaldehyde + H2O2 + NH4(+). It carries out the reaction 2-phenylethylamine + O2 + H2O = 2-phenylacetaldehyde + H2O2 + NH4(+). Functionally, catalyzes the oxidative deamination of primary amines to the corresponding aldehydes with the concomitant production of hydrogen peroxide and ammonia. Has a preference for the primary monoamines methylamine and benzylamine. Could also act on 2-phenylethylamine but much less efficiently. At endothelial cells surface can also function as a cell adhesion protein that participates in lymphocyte extravasation and recirculation by mediating the binding of lymphocytes to peripheral lymph node vascular endothelial cells in an L-selectin-independent fashion. Has no semicarbazide-sensitive amine oxidase (SSAO) activity. This Homo sapiens (Human) protein is Amine oxidase [copper-containing] 3.